Reading from the N-terminus, the 167-residue chain is Endoribonuclease YbeY (167 aa).

Residues His131, His135, and His141 each contribute to the Zn(2+) site.

The protein belongs to the endoribonuclease YbeY family. It depends on Zn(2+) as a cofactor.

The protein resides in the cytoplasm. In terms of biological role, single strand-specific metallo-endoribonuclease involved in late-stage 70S ribosome quality control and in maturation of the 3' terminus of the 16S rRNA. The chain is Endoribonuclease YbeY from Rickettsia prowazekii (strain Madrid E).